Consider the following 185-residue polypeptide: HTH-type transcriptional regulator Hpr (185 aa).

Residues 13-157 (AMIFSQRIAQ…LIAILRNIYG (145 aa)) form the HTH marR-type domain. The segment at residues 63-86 (ISEIAKFGVMHVSTAFNFSKKLEE) is a DNA-binding region (H-T-H motif).

As to quaternary structure, homodimer.

Negative regulator of protease production and sporulation. The sequence is that of HTH-type transcriptional regulator Hpr from Bacillus anthracis (strain CDC 684 / NRRL 3495).